The primary structure comprises 259 residues: MTKTLTQHLETIKREGKGIFLPYIMAGDHEKGLAGLPETIAFLENLGVSAIEIGLPFSDPVADGPVIEEAGLRSLGHHTSAKSLIASLQKLDTQLPLIIMTYFNPIFQYGLKDFIKDLARTPVKGLIIPDLPYEHRDFILPLLEDSDIALVPLVSLTTGLERQQELIKEAEGFIYAVAINGVTGKSGSYRNDLDQHLSKLHDIAEIPVLTGFGVSTLEDVDRFNQVSDGVIVGSKIVKALHEKDASIAAFIQEAAAYKK.

Residues E52 and D63 each act as proton acceptor in the active site.

Belongs to the TrpA family. Tetramer of two alpha and two beta chains.

It carries out the reaction (1S,2R)-1-C-(indol-3-yl)glycerol 3-phosphate + L-serine = D-glyceraldehyde 3-phosphate + L-tryptophan + H2O. It participates in amino-acid biosynthesis; L-tryptophan biosynthesis; L-tryptophan from chorismate: step 5/5. Functionally, the alpha subunit is responsible for the aldol cleavage of indoleglycerol phosphate to indole and glyceraldehyde 3-phosphate. In Streptococcus sanguinis (strain SK36), this protein is Tryptophan synthase alpha chain.